We begin with the raw amino-acid sequence, 236 residues long: Ribose-5-phosphate isomerase A (236 aa).

Substrate-binding positions include 33–36 (TGST), 90–93 (DGAD), and 103–106 (KGGG). Glutamate 112 acts as the Proton acceptor in catalysis. Substrate is bound at residue lysine 130.

The protein belongs to the ribose 5-phosphate isomerase family. As to quaternary structure, homodimer.

The catalysed reaction is aldehydo-D-ribose 5-phosphate = D-ribulose 5-phosphate. It participates in carbohydrate degradation; pentose phosphate pathway; D-ribose 5-phosphate from D-ribulose 5-phosphate (non-oxidative stage): step 1/1. Its function is as follows. Catalyzes the reversible conversion of ribose-5-phosphate to ribulose 5-phosphate. The protein is Ribose-5-phosphate isomerase A of Trichormus variabilis (strain ATCC 29413 / PCC 7937) (Anabaena variabilis).